The primary structure comprises 195 residues: Holliday junction branch migration complex subunit RuvA (195 aa).

The tract at residues 1 to 64 (MIASIRGIIQ…EDALTLYGFS (64 aa)) is domain I. A domain II region spans residues 65 to 142 (DPAQRNLFEQ…DLRQLSGTTP (78 aa)). The interval 143 to 151 (GNVSTLDRE) is flexible linker. Residues 151-195 (ELTDILISLGYSATEAAAAIAALPGDAPPTLEERLRLALRYFGSA) are domain III.

This sequence belongs to the RuvA family. In terms of assembly, homotetramer. Forms an RuvA(8)-RuvB(12)-Holliday junction (HJ) complex. HJ DNA is sandwiched between 2 RuvA tetramers; dsDNA enters through RuvA and exits via RuvB. An RuvB hexamer assembles on each DNA strand where it exits the tetramer. Each RuvB hexamer is contacted by two RuvA subunits (via domain III) on 2 adjacent RuvB subunits; this complex drives branch migration. In the full resolvosome a probable DNA-RuvA(4)-RuvB(12)-RuvC(2) complex forms which resolves the HJ.

The protein resides in the cytoplasm. In terms of biological role, the RuvA-RuvB-RuvC complex processes Holliday junction (HJ) DNA during genetic recombination and DNA repair, while the RuvA-RuvB complex plays an important role in the rescue of blocked DNA replication forks via replication fork reversal (RFR). RuvA specifically binds to HJ cruciform DNA, conferring on it an open structure. The RuvB hexamer acts as an ATP-dependent pump, pulling dsDNA into and through the RuvAB complex. HJ branch migration allows RuvC to scan DNA until it finds its consensus sequence, where it cleaves and resolves the cruciform DNA. The protein is Holliday junction branch migration complex subunit RuvA of Chloroflexus aurantiacus (strain ATCC 29364 / DSM 637 / Y-400-fl).